The chain runs to 465 residues: Muscarinic acetylcholine receptor M2 (465 aa).

At 1–21 the chain is on the extracellular side; that stretch reads MNNSTNSSNNVALTSPYKTFE. N-linked (GlcNAc...) asparagine glycans are attached at residues N2, N3, and N6. Residues 22–44 form a helical membrane-spanning segment; the sequence is VVFIVLVAGSLSLVTIIGNILVM. Residues 45-58 lie on the Cytoplasmic side of the membrane; it reads VSIKVNRHLQTVNN. The chain crosses the membrane as a helical span at residues 59–79; it reads YFLFSLACADLIIGVFSMNLY. The Extracellular segment spans residues 80-96; it reads TLYTVIGYWPLGPVVCD. C95 and C175 are joined by a disulfide. A helical transmembrane segment spans residues 97–118; the sequence is LWLALDYVVSNASVMNLLIISF. The Important for signaling motif lies at 119-121; it reads DRY. Residues 119–138 lie on the Cytoplasmic side of the membrane; it reads DRYFCVTKPLTYPVKRTTKM. Residues 139-161 traverse the membrane as a helical segment; the sequence is AGMMIAAAWVLSFILWAPAILFW. Residues 162–183 lie on the Extracellular side of the membrane; it reads QFIVGVRTVEDGECYIQFFSNA. A helical membrane pass occupies residues 184–208; that stretch reads AVTFGTAIAAFYLPVIIMTVLYWHI. Residues 209–386 lie on the Cytoplasmic side of the membrane; that stretch reads SRASKSRIKK…PPSREKKVTR (178 aa). Positions 217–319 are disordered; sequence KKDKKEPVAN…SVGHSKDENS (103 aa). The residue at position 231 (S231) is a Phosphoserine. Residues 253-269 are compositionally biased toward basic and acidic residues; that stretch reads GLEHNKIQNGKTPRDAV. 2 stretches are compositionally biased toward polar residues: residues 283-292 and 303-312; these read NDSTSVSAVA and DENTVSTSVG. The chain crosses the membrane as a helical span at residues 387–409; that stretch reads TILAILLAFIITWAPYNVMVLIN. Topologically, residues 410 to 417 are extracellular; sequence TFCAPCIP. C412 and C415 are disulfide-bonded. A helical transmembrane segment spans residues 418–441; the sequence is NTVWTIGYWLCYINSTINPACYAL. Residues 435 to 439 carry the Important for signaling motif; it reads NPACY. At 442-465 the chain is on the cytoplasmic side; it reads CNATFKKTFKHLLMCHYKNIGATR. Phosphothreonine occurs at positions 445, 449, and 464.

This sequence belongs to the G-protein coupled receptor 1 family. Muscarinic acetylcholine receptor subfamily. CHRM2 sub-subfamily. Interacts with ARRB1 and ARRB2. Interacts with RACK1; the interaction regulates CHRM2 internalization. In terms of processing, phosphorylated in response to agonist treatment.

The protein localises to the cell membrane. It is found in the postsynaptic cell membrane. Its function is as follows. The muscarinic acetylcholine receptor mediates various cellular responses, including inhibition of adenylate cyclase, breakdown of phosphoinositides and modulation of potassium channels through the action of G proteins. Primary transducing effect is adenylate cyclase inhibition. Signaling promotes phospholipase C activity, leading to the release of inositol trisphosphate (IP3); this then triggers calcium ion release into the cytosol. This is Muscarinic acetylcholine receptor M2 (CHRM2) from Bos taurus (Bovine).